The following is a 417-amino-acid chain: Serine--tRNA ligase (417 aa).

232–234 (TSE) provides a ligand contact to L-serine. 263 to 265 (RKE) lines the ATP pocket. Glutamate 286 is an L-serine binding site. 350–353 (EISS) serves as a coordination point for ATP. L-serine is bound at residue serine 385.

The protein belongs to the class-II aminoacyl-tRNA synthetase family. Type-1 seryl-tRNA synthetase subfamily. In terms of assembly, homodimer. The tRNA molecule binds across the dimer.

It is found in the cytoplasm. It carries out the reaction tRNA(Ser) + L-serine + ATP = L-seryl-tRNA(Ser) + AMP + diphosphate + H(+). The enzyme catalyses tRNA(Sec) + L-serine + ATP = L-seryl-tRNA(Sec) + AMP + diphosphate + H(+). It participates in aminoacyl-tRNA biosynthesis; selenocysteinyl-tRNA(Sec) biosynthesis; L-seryl-tRNA(Sec) from L-serine and tRNA(Sec): step 1/1. Catalyzes the attachment of serine to tRNA(Ser). Is also able to aminoacylate tRNA(Sec) with serine, to form the misacylated tRNA L-seryl-tRNA(Sec), which will be further converted into selenocysteinyl-tRNA(Sec). The protein is Serine--tRNA ligase of Campylobacter hominis (strain ATCC BAA-381 / DSM 21671 / CCUG 45161 / LMG 19568 / NCTC 13146 / CH001A).